A 185-amino-acid chain; its full sequence is UPF0397 protein CPF_1836 (185 aa).

A run of 5 helical transmembrane segments spans residues 11–31, 44–64, 71–91, 111–131, and 149–169; these read IVAI…GSLP, AFLA…IGFI, IVFF…VGLI, IFMF…LVAP, and GVIG…ILIA.

This sequence belongs to the UPF0397 family.

Its subcellular location is the cell membrane. This chain is UPF0397 protein CPF_1836, found in Clostridium perfringens (strain ATCC 13124 / DSM 756 / JCM 1290 / NCIMB 6125 / NCTC 8237 / Type A).